We begin with the raw amino-acid sequence, 569 residues long: Membrane protein insertase YidC (569 aa).

A helical membrane pass occupies residues 6-26 (FVLFLIFATSLLFLWDAWQKE). 2 stretches are compositionally biased toward polar residues: residues 32-52 (QGPK…TAGT) and 62-74 (LASS…STAE). Residues 32–81 (QGPKTAVQGTETQANTGTAGTAETPVPGDQLASSVPQRGSTAENGAPVRA) form a disordered region. 5 consecutive transmembrane segments (helical) span residues 348-368 (VVDY…LSLF), 375-395 (WGVA…PLSA), 442-462 (GGCL…WVLL), 479-499 (LSAP…MFLQ), and 519-539 (PLAF…YSLV).

Belongs to the OXA1/ALB3/YidC family. Type 1 subfamily. As to quaternary structure, interacts with the Sec translocase complex via SecD. Specifically interacts with transmembrane segments of nascent integral membrane proteins during membrane integration.

The protein localises to the cell inner membrane. Required for the insertion and/or proper folding and/or complex formation of integral membrane proteins into the membrane. Involved in integration of membrane proteins that insert both dependently and independently of the Sec translocase complex, as well as at least some lipoproteins. Aids folding of multispanning membrane proteins. This chain is Membrane protein insertase YidC, found in Nitrosospira multiformis (strain ATCC 25196 / NCIMB 11849 / C 71).